The following is a 451-amino-acid chain: UPF0210 protein NMC1568 (451 aa).

The protein belongs to the UPF0210 family. In terms of assembly, homodimer.

The chain is UPF0210 protein NMC1568 from Neisseria meningitidis serogroup C / serotype 2a (strain ATCC 700532 / DSM 15464 / FAM18).